Reading from the N-terminus, the 125-residue chain is Gene 61 protein (125 aa).

This chain is Gene 61 protein (61), found in Mycobacterium phage D29 (Mycobacteriophage D29).